The sequence spans 533 residues: Subtilisin-like protease 1 (533 aa).

The first 19 residues, 1–19, serve as a signal peptide directing secretion; sequence MGVFRFISISLAAVSAANA. Positions 20–116 are excised as a propeptide; sequence AQILSMPHAQ…VEPDTIISVH (97 aa). Positions 34–115 constitute an Inhibitor I9 domain; the sequence is SYIVMMKDDT…FVEPDTIISV (82 aa). The region spanning 126-400 is the Peptidase S8 domain; the sequence is SWGLARISNP…NVLINNGGAK (275 aa). Catalysis depends on charge relay system residues Asp158 and His190. The segment at 175–198 is disordered; the sequence is GSNQVNDGDDRDGSGHGTHTSGTM. 2 N-linked (GlcNAc...) asparagine glycosylation sites follow: Asn233 and Asn251. Polar residues predominate over residues 282–294; the sequence is NDNQDAQSSSPAS. Positions 282–312 are disordered; sequence NDNQDAQSSSPASEPSVCTVGSSAEDDSRSS. The Charge relay system role is filled by Ser345. The span at 378–394 shows a compositional bias: polar residues; sequence TSSITDAGPGTPTNVLI. Residues 378–512 form a disordered region; it reads TSSITDAGPG…YPGGDNFDFD (135 aa). A compositionally biased stretch (pro residues) spans 405-470; the sequence is NPNPAPSPSP…FPGEPFPGEP (66 aa). Residues 471 to 487 are compositionally biased toward low complexity; that stretch reads FPGESFPGESFPGESAP. Residues 488–502 are compositionally biased toward pro residues; it reads APAPMPPSPQHPHTP.

Belongs to the peptidase S8 family.

It is found in the secreted. Secreted subtilisin-like serine protease with keratinolytic activity that contributes to pathogenicity. The protein is Subtilisin-like protease 1 (SUB1) of Arthroderma benhamiae (strain ATCC MYA-4681 / CBS 112371) (Trichophyton mentagrophytes).